The chain runs to 445 residues: Tripartite motif-containing protein 43B (445 aa).

Residues 16–57 (CSICQGIFMNPVYLKCGHKFCEACLLLFQEDIKFPAYCPMCM) form an RING-type zinc finger. A B box-type zinc finger spans residues 88-129 (SEEHKCVTHKAKKMIFCDKSKILLCHLCSDSQEHSGHTHCSI). Positions 93, 96, 115, and 121 each coordinate Zn(2+). Residues 271–445 (RLRAHSIPGL…VRPFFSAVYT (175 aa)) enclose the B30.2/SPRY domain.

The protein belongs to the TRIM/RBCC family.

This Mus musculus (Mouse) protein is Tripartite motif-containing protein 43B.